The chain runs to 24 residues: Brevinin-1E (24 aa).

An intrachain disulfide couples cysteine 18 to cysteine 24.

Expressed by the skin glands.

Its subcellular location is the secreted. Antimicrobial peptide. Stimulates insulin release by BRIN-BD11 cells in vitro. This chain is Brevinin-1E, found in Pelophylax saharicus (Sahara frog).